Here is a 467-residue protein sequence, read N- to C-terminus: Septin-10 (467 aa).

One can recognise a Septin-type G domain in the interval 63 to 329 (QGFCFNILCV…ELYRRCKLEE (267 aa)). Positions 73-80 (GETGIGKS) are G1 motif. Residues 73 to 80 (GETGIGKS), glycine 128, 209 to 217 (KADTVSKTE), glycine 263, and arginine 278 each bind GTP. A G3 motif region spans residues 125–128 (NTVG). Positions 208–211 (AKAD) are G4 motif.

This sequence belongs to the TRAFAC class TrmE-Era-EngA-EngB-Septin-like GTPase superfamily. Septin GTPase family. In terms of assembly, septins polymerize into heterooligomeric protein complexes that form filaments, and can associate with cellular membranes, actin filaments and microtubules. GTPase activity is required for filament formation. Interacts with ADGB. In terms of processing, proteolytically cleaved in vitro in a calmodulin-dependent manner.

It is found in the cytoplasm. Its subcellular location is the cytoskeleton. The protein resides in the cell projection. It localises to the cilium. The protein localises to the flagellum. Its function is as follows. Filament-forming cytoskeletal GTPase. May play a role in cytokinesis (Potential). This chain is Septin-10, found in Pongo abelii (Sumatran orangutan).